Consider the following 179-residue polypeptide: Fas apoptotic inhibitory molecule 1 (179 aa).

The residue at position 2 (Thr2) is an N-acetylthreonine.

It belongs to the FAIM1 family.

It localises to the cytoplasm. Plays a role as an inducible effector molecule that mediates Fas resistance produced by surface Ig engagement in B cells. In Homo sapiens (Human), this protein is Fas apoptotic inhibitory molecule 1 (FAIM).